A 734-amino-acid polypeptide reads, in one-letter code: Translation initiation factor IF-2 (734 aa).

Residues 39–110 (SKFAPRSSFT…TGKPETKKRE (72 aa)) form a disordered region. Basic and acidic residues predominate over residues 82–110 (DYEKRKLAEQRATRRLKGDTGKPETKKRE). The 168-residue stretch at 238 to 405 (NRPPIVTVMG…SIVLQAEILD (168 aa)) folds into the tr-type G domain. Positions 247–254 (GHVDHGKT) are G1. GTP is bound at residue 247–254 (GHVDHGKT). Residues 272–276 (GITQH) are G2. The G3 stretch occupies residues 293 to 296 (DTPG). Residues 293–297 (DTPGH) and 347–350 (NKCD) contribute to the GTP site. Residues 347 to 350 (NKCD) are G4. Residues 383 to 385 (SAK) are G5.

It belongs to the TRAFAC class translation factor GTPase superfamily. Classic translation factor GTPase family. IF-2 subfamily.

Its subcellular location is the cytoplasm. Functionally, one of the essential components for the initiation of protein synthesis. Protects formylmethionyl-tRNA from spontaneous hydrolysis and promotes its binding to the 30S ribosomal subunits. Also involved in the hydrolysis of GTP during the formation of the 70S ribosomal complex. The polypeptide is Translation initiation factor IF-2 (Pelagibacter ubique (strain HTCC1062)).